Consider the following 95-residue polypeptide: Acylphosphatase (95 aa).

Residues 7–95 (CTMAWVYGSV…RSWDKFAILY (89 aa)) form the Acylphosphatase-like domain. Residues Arg22 and Asn40 contribute to the active site.

Belongs to the acylphosphatase family.

The enzyme catalyses an acyl phosphate + H2O = a carboxylate + phosphate + H(+). The protein is Acylphosphatase (acyP) of Klebsiella pneumoniae subsp. pneumoniae (strain ATCC 700721 / MGH 78578).